A 1023-amino-acid chain; its full sequence is Lon protease homolog (1023 aa).

Residue 515-522 coordinates ATP; that stretch reads GPPGVGKT. Residues 810–1003 form the Lon proteolytic domain; the sequence is TNMIGVINGL…IEIITDPNVI (194 aa). Residue Ser-906 is part of the active site.

This sequence belongs to the peptidase S16 family.

In Acanthamoeba polyphaga (Amoeba), this protein is Lon protease homolog.